The sequence spans 217 residues: tRNA (guanine-N(7)-)-methyltransferase (217 aa).

Residues E44, D69, D96, and D118 each contribute to the S-adenosyl-L-methionine site. Residue D118 is part of the active site. K122 contributes to the substrate binding site. An interaction with RNA region spans residues 124 to 129 (RHEKRR). Substrate is bound by residues D154 and 193 to 196 (TEYE).

It belongs to the class I-like SAM-binding methyltransferase superfamily. TrmB family.

It catalyses the reaction guanosine(46) in tRNA + S-adenosyl-L-methionine = N(7)-methylguanosine(46) in tRNA + S-adenosyl-L-homocysteine. Its pathway is tRNA modification; N(7)-methylguanine-tRNA biosynthesis. In terms of biological role, catalyzes the formation of N(7)-methylguanine at position 46 (m7G46) in tRNA. In Lactococcus lactis subsp. lactis (strain IL1403) (Streptococcus lactis), this protein is tRNA (guanine-N(7)-)-methyltransferase.